The chain runs to 233 residues: Protein FAM204A (233 aa).

The segment at 1–126 (MWSGLLPPGL…HSEPSSNETQ (126 aa)) is disordered. A compositionally biased stretch (acidic residues) spans 13–24 (SDAESNSEDEAT). Residues 39–58 (ESIRKTEIIDFSTDEPKTET) are compositionally biased toward basic and acidic residues. Residues 97 to 109 (FRGKRRKRSRKDK) are compositionally biased toward basic residues. Residues 144–164 (VKRKKVEKSGLEKRIDQAVEE) are a coiled coil.

The protein is Protein FAM204A (FAM204A) of Homo sapiens (Human).